The chain runs to 604 residues: Glutamine--fructose-6-phosphate aminotransferase [isomerizing] (604 aa).

The active-site Nucleophile; for GATase activity is the C2. A Glutamine amidotransferase type-2 domain is found at 2-218 (CGIVGVVGNT…DKELVIVKKD (217 aa)). 2 SIS domains span residues 284–423 (IIKS…ANGK) and 456–594 (VEQL…VDKP). Catalysis depends on K599, which acts as the For Fru-6P isomerization activity.

In terms of assembly, homodimer.

Its subcellular location is the cytoplasm. The enzyme catalyses D-fructose 6-phosphate + L-glutamine = D-glucosamine 6-phosphate + L-glutamate. In terms of biological role, catalyzes the first step in hexosamine metabolism, converting fructose-6P into glucosamine-6P using glutamine as a nitrogen source. The chain is Glutamine--fructose-6-phosphate aminotransferase [isomerizing] from Streptococcus agalactiae serotype III (strain NEM316).